Reading from the N-terminus, the 88-residue chain is Large ribosomal subunit protein bL31B (88 aa).

The protein belongs to the bacterial ribosomal protein bL31 family. Type B subfamily. As to quaternary structure, part of the 50S ribosomal subunit.

The polypeptide is Large ribosomal subunit protein bL31B (Pasteurella multocida (strain Pm70)).